Reading from the N-terminus, the 306-residue chain is Non-specific ribonucleoside hydrolase RihC (306 aa).

The active site involves His-235.

It belongs to the IUNH family. RihC subfamily.

Hydrolyzes both purine and pyrimidine ribonucleosides with a broad-substrate specificity. This is Non-specific ribonucleoside hydrolase RihC from Salmonella typhi.